The sequence spans 302 residues: tRNA dimethylallyltransferase (302 aa).

Residue 8–15 coordinates ATP; that stretch reads GSSGSGKS. 10-15 lines the substrate pocket; sequence SGSGKS. The segment at 33 to 36 is interaction with substrate tRNA; that stretch reads DSLS.

The protein belongs to the IPP transferase family. As to quaternary structure, monomer. Mg(2+) serves as cofactor.

It catalyses the reaction adenosine(37) in tRNA + dimethylallyl diphosphate = N(6)-dimethylallyladenosine(37) in tRNA + diphosphate. Catalyzes the transfer of a dimethylallyl group onto the adenine at position 37 in tRNAs that read codons beginning with uridine, leading to the formation of N6-(dimethylallyl)adenosine (i(6)A). This Helicobacter hepaticus (strain ATCC 51449 / 3B1) protein is tRNA dimethylallyltransferase.